A 367-amino-acid polypeptide reads, in one-letter code: Uroporphyrinogen decarboxylase (367 aa).

Substrate-binding positions include Arg28–Arg32, Asp78, Tyr158, Thr213, and His334.

It belongs to the uroporphyrinogen decarboxylase family. As to quaternary structure, homodimer.

The protein localises to the cytoplasm. It carries out the reaction uroporphyrinogen III + 4 H(+) = coproporphyrinogen III + 4 CO2. It participates in porphyrin-containing compound metabolism; protoporphyrin-IX biosynthesis; coproporphyrinogen-III from 5-aminolevulinate: step 4/4. Functionally, catalyzes the decarboxylation of four acetate groups of uroporphyrinogen-III to yield coproporphyrinogen-III. The protein is Uroporphyrinogen decarboxylase of Ralstonia pickettii (strain 12J).